Here is a 462-residue protein sequence, read N- to C-terminus: Cathepsin F (462 aa).

An N-terminal signal peptide occupies residues 1–19 (MAPLLQLLWLLTLLSTVAL). Positions 20 to 248 (SPVPAKPWAD…MSPAKSINDL (229 aa)) are cleaved as a propeptide — activation peptide. N-linked (GlcNAc...) asparagine glycans are attached at residues N35, N138, and N173. 2 disulfides stabilise this stretch: C270–C311 and C304–C344. C273 is an active-site residue. N-linked (GlcNAc...) asparagine glycosylation is found at N345 and N356. Cysteines 402 and 450 form a disulfide. H409 is an active-site residue. N-linked (GlcNAc...) asparagine glycosylation occurs at N418. The active site involves N429.

Belongs to the peptidase C1 family.

It is found in the lysosome. The enzyme catalyses The recombinant enzyme cleaves synthetic substrates with Phe and Leu (better than Val) in P2, with high specificity constant (kcat/Km) comparable to that of cathepsin L.. Functionally, thiol protease which is believed to participate in intracellular degradation and turnover of proteins. Has also been implicated in tumor invasion and metastasis. The sequence is that of Cathepsin F (Ctsf) from Mus musculus (Mouse).